A 1144-amino-acid chain; its full sequence is PAN2-PAN3 deadenylation complex catalytic subunit PAN2 (1144 aa).

WD repeat units follow at residues 27–66 (KKEK…YTRH), 153–193 (SSTY…VIHS), 196–233 (GHSA…NVYD), and 302–341 (HPCK…SGFT). Residues 344 to 481 (AAVLEYQDYP…LLEYKPSNNI (138 aa)) form a linker region. In terms of domain architecture, USP spans 482–887 (DIPPAYSKLQ…TPEIVVYSDA (406 aa)). The Exonuclease domain maps to 939-1110 (VALDAEFVSL…EDAHTALLLY (172 aa)). A divalent metal cation contacts are provided by Asp942, Glu944, Asp1051, and Asp1102.

This sequence belongs to the peptidase C19 family. PAN2 subfamily. As to quaternary structure, forms a heterotrimer with an asymmetric homodimer of the regulatory subunit PAN3 to form the poly(A)-nuclease (PAN) deadenylation complex. Requires a divalent metal cation as cofactor.

It localises to the cytoplasm. The catalysed reaction is Exonucleolytic cleavage of poly(A) to 5'-AMP.. Positively regulated by the regulatory subunit PAN3. Catalytic subunit of the poly(A)-nuclease (PAN) deadenylation complex, one of two cytoplasmic mRNA deadenylases involved in mRNA turnover. PAN specifically shortens poly(A) tails of RNA and the activity is stimulated by poly(A)-binding protein PAB1. PAN deadenylation is followed by rapid degradation of the shortened mRNA tails by the CCR4-NOT complex. Deadenylated mRNAs are then degraded by two alternative mechanisms, namely exosome-mediated 3'-5' exonucleolytic degradation, or deadenylation-dependent mRNA decaping and subsequent 5'-3' exonucleolytic degradation by XRN1. May also be involved in post-transcriptional maturation of mRNA poly(A) tails. This chain is PAN2-PAN3 deadenylation complex catalytic subunit PAN2, found in Kluyveromyces lactis (strain ATCC 8585 / CBS 2359 / DSM 70799 / NBRC 1267 / NRRL Y-1140 / WM37) (Yeast).